Here is a 313-residue protein sequence, read N- to C-terminus: MPTPKAFTLLGPTACGKTALALKIAETLPVEIISLDSALLYTGMDIGTAKPSASERAFVPHHLIDIITPVQTYSAARFVEDCTRLTGEITARGKCPLIVGGTMMYFRALTQGLNDLPEADACLRADLDEQKQMYGLDFLYRTLQKVDPETACRLKPNDSQRIGRALEVYYLTGRPMSAHLNGQPEHTLPFELYTAALIPENRARLHENIALRFHLMLEQGFIGEVENLRRRYPGLTADSPAIRCVGYRQAWEHLDGATDRQTFIEKGIAATRQLAKRQLTWLRKTPLDCVADPFSDGTSGTRLIEAAKRFFGE.

11-18 (GPTACGKT) contacts ATP. 13–18 (TACGKT) provides a ligand contact to substrate. Interaction with substrate tRNA stretches follow at residues 36–39 (DSAL), 160–164 (QRIGR), and 243–248 (RCVGYR).

This sequence belongs to the IPP transferase family. Monomer. Mg(2+) is required as a cofactor.

The catalysed reaction is adenosine(37) in tRNA + dimethylallyl diphosphate = N(6)-dimethylallyladenosine(37) in tRNA + diphosphate. Catalyzes the transfer of a dimethylallyl group onto the adenine at position 37 in tRNAs that read codons beginning with uridine, leading to the formation of N6-(dimethylallyl)adenosine (i(6)A). This is tRNA dimethylallyltransferase from Neisseria gonorrhoeae (strain NCCP11945).